A 106-amino-acid chain; its full sequence is Large ribosomal subunit protein P1A (106 aa).

The segment at 74 to 106 (AGGGAAAEEAAEEEKEEEAKEESDDDMGFGLFD) is disordered. Residues 82–100 (EAAEEEKEEEAKEESDDDM) show a composition bias toward acidic residues.

It belongs to the eukaryotic ribosomal protein P1/P2 family. In terms of assembly, component of the large ribosomal subunit (LSU). Mature ribosomes consist of a small (40S) and a large (60S) subunit. The 40S subunit contains about 32 different proteins and 1 molecule of RNA (18S). The 60S subunit contains 45 different proteins and 3 molecules of RNA (25S, 5.8S and 5S). The 5 acidic ribosomal P-proteins form the stalk structure of the 60S subunit. They are organized as a pentameric complex in which uL10/P0 interacts with 2 heterodimers, P1A-P2B and P1B-P2A. In terms of processing, phosphorylated.

The protein resides in the cytoplasm. In terms of biological role, component of the ribosome, a large ribonucleoprotein complex responsible for the synthesis of proteins in the cell. The small ribosomal subunit (SSU) binds messenger RNAs (mRNAs) and translates the encoded message by selecting cognate aminoacyl-transfer RNA (tRNA) molecules. The large subunit (LSU) contains the ribosomal catalytic site termed the peptidyl transferase center (PTC), which catalyzes the formation of peptide bonds, thereby polymerizing the amino acids delivered by tRNAs into a polypeptide chain. The nascent polypeptides leave the ribosome through a tunnel in the LSU and interact with protein factors that function in enzymatic processing, targeting, and the membrane insertion of nascent chains at the exit of the ribosomal tunnel. The polypeptide is Large ribosomal subunit protein P1A (RPP1A) (Candida albicans (strain SC5314 / ATCC MYA-2876) (Yeast)).